The chain runs to 158 residues: Large ribosomal subunit protein uL11 (158 aa).

The protein belongs to the universal ribosomal protein uL11 family. As to quaternary structure, part of the ribosomal stalk of the 50S ribosomal subunit. Interacts with L10 and the large rRNA to form the base of the stalk. L10 forms an elongated spine to which L12 dimers bind in a sequential fashion forming a multimeric L10(L12)X complex.

Its function is as follows. Forms part of the ribosomal stalk which helps the ribosome interact with GTP-bound translation factors. The protein is Large ribosomal subunit protein uL11 of Methanoculleus marisnigri (strain ATCC 35101 / DSM 1498 / JR1).